Reading from the N-terminus, the 64-residue chain is Small ribosomal subunit protein bS21 (64 aa).

This sequence belongs to the bacterial ribosomal protein bS21 family.

The protein is Small ribosomal subunit protein bS21 of Neorickettsia sennetsu (strain ATCC VR-367 / Miyayama) (Ehrlichia sennetsu).